The following is a 128-amino-acid chain: Orchestin (128 aa).

The N-terminal stretch at 1–20 (MNKVFIIGVCLFIVSQAVLA) is a signal peptide. The segment at 23-95 (WDSDESSDER…DEDSDDSQES (73 aa)) is disordered. 2 stretches are compositionally biased toward basic and acidic residues: residues 30–49 (DERLSDRSDESREEPRKLVV) and 56–81 (EDSNESAEVRRRDDSRESEEEPRKLS). Acidic residues predominate over residues 84 to 93 (TSDEDSDDSQ).

Post-translationally, phosphorylated on Ser and Tyr residues. Calcium-binding activity is dependent on serine phosphorylation but not on tyrosine phosphorylation. In terms of tissue distribution, posterior caeca epithelium of the gut.

The protein localises to the secreted. In terms of biological role, plays a role in cuticle calcification. May induce precipitation of the calcium stored in the posterior caeca as calcium carbonate. The polypeptide is Orchestin (Cryptorchestia cavimana (Amphipod)).